The primary structure comprises 210 residues: ATP-dependent dethiobiotin synthetase BioD (210 aa).

Residue 13–18 coordinates ATP; the sequence is GIGKTV. Threonine 17 lines the Mg(2+) pocket. Lysine 33 is a catalytic residue. Glutamate 101 is a binding site for Mg(2+). ATP is bound by residues 101–104 and 185–187; these read EGAG and PWL.

This sequence belongs to the dethiobiotin synthetase family. As to quaternary structure, homodimer. Mg(2+) is required as a cofactor.

The protein localises to the cytoplasm. The enzyme catalyses (7R,8S)-7,8-diammoniononanoate + CO2 + ATP = (4R,5S)-dethiobiotin + ADP + phosphate + 3 H(+). It functions in the pathway cofactor biosynthesis; biotin biosynthesis; biotin from 7,8-diaminononanoate: step 1/2. Its function is as follows. Catalyzes a mechanistically unusual reaction, the ATP-dependent insertion of CO2 between the N7 and N8 nitrogen atoms of 7,8-diaminopelargonic acid (DAPA, also called 7,8-diammoniononanoate) to form a ureido ring. The polypeptide is ATP-dependent dethiobiotin synthetase BioD (Bradyrhizobium sp. (strain BTAi1 / ATCC BAA-1182)).